A 238-amino-acid chain; its full sequence is tRNA (guanine-N(7)-)-methyltransferase (238 aa).

Residues glutamate 68, glutamate 93, aspartate 120, and aspartate 143 each coordinate S-adenosyl-L-methionine. Aspartate 143 is a catalytic residue. Substrate-binding positions include lysine 147, aspartate 179, and 216–219 (TKFE).

The protein belongs to the class I-like SAM-binding methyltransferase superfamily. TrmB family.

The catalysed reaction is guanosine(46) in tRNA + S-adenosyl-L-methionine = N(7)-methylguanosine(46) in tRNA + S-adenosyl-L-homocysteine. Its pathway is tRNA modification; N(7)-methylguanine-tRNA biosynthesis. In terms of biological role, catalyzes the formation of N(7)-methylguanine at position 46 (m7G46) in tRNA. The protein is tRNA (guanine-N(7)-)-methyltransferase of Shewanella baltica (strain OS195).